Here is a 73-residue protein sequence, read N- to C-terminus: MSAQTASGPTEDQVEILEYNFNKVNKHPDPTTLCLIAAEAGLTEEQTQKWFKQRLAEWRRSEGLPSECRSVTD.

Residues 3-62 constitute a DNA-binding region (homeobox; degenerate); that stretch reads AQTASGPTEDQVEILEYNFNKVNKHPDPTTLCLIAAEAGLTEEQTQKWFKQRLAEWRRSE.

As to quaternary structure, interacts with serum response factor (SRF). Component of a large complex containing histone deacetylases such as HDAC2. Interacts with the acetylated forms of HSPA1A and HSPA1B. Interacts with HSPA8. In terms of tissue distribution, expressed in the embryonic and adult heart and in the adult brain, liver, lung, skeletal muscle, intestine and spleen. Throughout embryonic and postnatal development, it is expressed in the myocardium.

The protein resides in the nucleus. It localises to the cytoplasm. Atypical homeodomain protein which does not bind DNA and is required to modulate cardiac growth and development. Acts via its interaction with SRF, thereby modulating the expression of SRF-dependent cardiac-specific genes and cardiac development. Prevents SRF-dependent transcription either by inhibiting SRF binding to DNA or by recruiting histone deacetylase (HDAC) proteins that prevent transcription by SRF. Overexpression causes cardiac hypertrophy. Acts as a co-chaperone for HSPA1A and HSPA1B chaperone proteins and assists in chaperone-mediated protein refolding. In Mus musculus (Mouse), this protein is Homeodomain-only protein (Hopx).